Consider the following 42-residue polypeptide: Potassium channel toxin gamma-KTx 1.3 (42 aa).

Disulfide bonds link Cys5-Cys23, Cys11-Cys34, Cys20-Cys39, and Cys24-Cys41.

This sequence belongs to the ergtoxin family. Gamma-KTx 1 subfamily. As to expression, expressed by the venom gland.

The protein localises to the secreted. Functionally, blocks Kv11/ERG potassium channels. This is Potassium channel toxin gamma-KTx 1.3 from Centruroides gracilis (Slenderbrown scorpion).